Reading from the N-terminus, the 258-residue chain is Lipoprotein-releasing system ATP-binding protein LolD (258 aa).

An ABC transporter domain is found at 5-244; that stretch reads LQCCQLSKSY…PTSSITDPAN (240 aa). 41–48 is an ATP binding site; it reads GSSGCGKS. Residues 222–258 form a disordered region; sequence LRPLSDNSEQALPPTSSITDPANNIKDNEPQANERHV. Polar residues predominate over residues 226–243; sequence SDNSEQALPPTSSITDPA. The segment covering 247–258 has biased composition (basic and acidic residues); sequence KDNEPQANERHV.

It belongs to the ABC transporter superfamily. Lipoprotein translocase (TC 3.A.1.125) family. As to quaternary structure, the complex is composed of two ATP-binding proteins (LolD) and two transmembrane proteins (LolC and LolE).

It is found in the cell inner membrane. In terms of biological role, part of the ABC transporter complex LolCDE involved in the translocation of mature outer membrane-directed lipoproteins, from the inner membrane to the periplasmic chaperone, LolA. Responsible for the formation of the LolA-lipoprotein complex in an ATP-dependent manner. The chain is Lipoprotein-releasing system ATP-binding protein LolD from Colwellia psychrerythraea (strain 34H / ATCC BAA-681) (Vibrio psychroerythus).